We begin with the raw amino-acid sequence, 194 residues long: Large ribosomal subunit protein eL15 (194 aa).

The interval 161–194 (GLTSAGKKGRGLMYKGKGAEKARPSVRANGKKTK) is disordered.

The protein belongs to the eukaryotic ribosomal protein eL15 family.

The polypeptide is Large ribosomal subunit protein eL15 (Methanococcus maripaludis (strain C5 / ATCC BAA-1333)).